A 241-amino-acid chain; its full sequence is Small ribosomal subunit protein uS2 (241 aa).

It belongs to the universal ribosomal protein uS2 family.

This Escherichia coli (strain 55989 / EAEC) protein is Small ribosomal subunit protein uS2.